A 509-amino-acid chain; its full sequence is ATP synthase subunit alpha (509 aa).

169-176 is an ATP binding site; sequence GDRQTGKT.

Belongs to the ATPase alpha/beta chains family. In terms of assembly, F-type ATPases have 2 components, CF(1) - the catalytic core - and CF(0) - the membrane proton channel. CF(1) has five subunits: alpha(3), beta(3), gamma(1), delta(1), epsilon(1). CF(0) has three main subunits: a(1), b(2) and c(9-12). The alpha and beta chains form an alternating ring which encloses part of the gamma chain. CF(1) is attached to CF(0) by a central stalk formed by the gamma and epsilon chains, while a peripheral stalk is formed by the delta and b chains.

It localises to the cell inner membrane. The enzyme catalyses ATP + H2O + 4 H(+)(in) = ADP + phosphate + 5 H(+)(out). Its function is as follows. Produces ATP from ADP in the presence of a proton gradient across the membrane. The alpha chain is a regulatory subunit. In Methylorubrum extorquens (strain CM4 / NCIMB 13688) (Methylobacterium extorquens), this protein is ATP synthase subunit alpha.